The primary structure comprises 556 residues: Membrane protein insertase YidC (556 aa).

A helical transmembrane segment spans residues 5–25; sequence TLTAIVLSFVLLTAFQFYMAW. The segment at 36–74 is disordered; sequence QVQSGESSAPAPLASTAPVADALPPPVEGMAGSAPQQAM. Residues 42 to 55 are compositionally biased toward low complexity; the sequence is SSAPAPLASTAPVA. 4 helical membrane passes run 370 to 390, 441 to 461, 468 to 488, and 510 to 530; these read NYGV…FPLA, LPIL…FLSV, FMLW…PLLM, and IMMF…SGLV.

Belongs to the OXA1/ALB3/YidC family. Type 1 subfamily. In terms of assembly, interacts with the Sec translocase complex via SecD. Specifically interacts with transmembrane segments of nascent integral membrane proteins during membrane integration.

The protein localises to the cell inner membrane. Functionally, required for the insertion and/or proper folding and/or complex formation of integral membrane proteins into the membrane. Involved in integration of membrane proteins that insert both dependently and independently of the Sec translocase complex, as well as at least some lipoproteins. Aids folding of multispanning membrane proteins. The chain is Membrane protein insertase YidC from Magnetococcus marinus (strain ATCC BAA-1437 / JCM 17883 / MC-1).